The sequence spans 935 residues: Phosphoenolpyruvate carboxylase (935 aa).

Catalysis depends on residues H161 and K593.

This sequence belongs to the PEPCase type 1 family. Mg(2+) serves as cofactor.

The enzyme catalyses oxaloacetate + phosphate = phosphoenolpyruvate + hydrogencarbonate. In terms of biological role, forms oxaloacetate, a four-carbon dicarboxylic acid source for the tricarboxylic acid cycle. The chain is Phosphoenolpyruvate carboxylase from Mycobacterium avium (strain 104).